The sequence spans 137 residues: Cofilin (137 aa).

The ADF-H domain occupies 5 to 135 (GVKVSPECLE…AYETVLEKVT (131 aa)).

The protein belongs to the actin-binding proteins ADF family.

The protein resides in the cytoplasm. It localises to the cytoskeleton. Its subcellular location is the nucleus matrix. Functionally, controls reversibly actin polymerization and depolymerization in a pH-sensitive manner. It has the ability to bind G- and F-actin in a 1:1 ratio of cofilin to actin. Binding to F-actin is regulated by tropomyosin. It is the major component of intranuclear and cytoplasmic actin rods. Required for accumulation of actin at the cell division site via depolymerizing actin at the cell ends. In association with myosin II has a role in the assembly of the contractile ring via severing actin filaments. Involved in the maintenance of the contractile ring once formed. In association with profilin and capping protein, has a role in the mitotic reorganization of the actin cytoskeleton. Severs actin filaments (F-actin). This is Cofilin (cof1) from Schizosaccharomyces pombe (strain 972 / ATCC 24843) (Fission yeast).